Here is a 586-residue protein sequence, read N- to C-terminus: Probable zinc metalloprotease EGY3, chloroplastic (586 aa).

A chloroplast-targeting transit peptide spans 1 to 54 (MASSSLVTSLLFSSSSSSNTATSTSSRRSFSLFSKNQYCKPRPLRRSSSRLLVR). 2 disordered regions span residues 13–32 (SSSS…SFSL) and 58–122 (QQQQ…DWRS). Residues 61-73 (QEEKAAPAAESHH) are compositionally biased toward basic and acidic residues. A coiled-coil region spans residues 103-195 (VKKSKEELEE…NTFKALDLNK (93 aa)). Helical transmembrane passes span 287 to 307 (LSAV…SGFF), 318 to 338 (VSDV…SEIA), 389 to 409 (ASAY…DGSL), 427 to 447 (PLLS…GNVL), 454 to 474 (VGVP…VTSL), 506 to 526 (VALG…WGLF), and 550 to 570 (YAWG…NGGG).

Belongs to the peptidase M50B family.

Its subcellular location is the plastid. The protein localises to the chloroplast membrane. Its function is as follows. Probable membrane-associated metalloprotease that may be involved in chloroplast development. This is Probable zinc metalloprotease EGY3, chloroplastic (EGY3) from Oryza sativa subsp. japonica (Rice).